A 374-amino-acid chain; its full sequence is 4-galactosyl-N-acetylglucosaminide 3-alpha-L-fucosyltransferase FUT5 (374 aa).

Residues 1 to 15 (MDPLGPAKPQWLWRR) are Cytoplasmic-facing. The helical; Signal-anchor for type II membrane protein transmembrane segment at 16–34 (CLAGLLFQLLVAVCFFSYL) threads the bilayer. At 35 to 374 (RVSQDHATGS…TVRSIAAWFT (340 aa)) the chain is on the lumenal side. N-linked (GlcNAc...) asparagine glycans are attached at residues Asn-60, Asn-105, Asn-167, and Asn-198.

The protein belongs to the glycosyltransferase 10 family.

The protein localises to the golgi apparatus. The protein resides in the golgi stack membrane. It catalyses the reaction a beta-D-galactosyl-(1-&gt;3)-N-acetyl-beta-D-glucosaminyl derivative + GDP-beta-L-fucose = a beta-D-galactosyl-(1-&gt;3)-[alpha-L-fucosyl-(1-&gt;4)]-N-acetyl-beta-D-glucosaminyl derivative + GDP + H(+). It carries out the reaction an N-acetyl-alpha-neuraminyl-(2-&gt;3)-beta-D-galactosyl-(1-&gt;4)-N-acetyl-beta-D-glucosaminyl derivative + GDP-beta-L-fucose = an alpha-Neu5Ac-(2-&gt;3)-beta-D-Gal-(1-&gt;4)-[alpha-L-Fuc-(1-&gt;3)]-beta-D-GlcNAc derivative + GDP + H(+). The catalysed reaction is an alpha-Neu5Ac-(2-&gt;3)-beta-D-Gal-(1-&gt;4)-beta-D-GlcNAc-(1-&gt;3)-beta-D-Gal-(1-&gt;4)-[alpha-L-Fuc-(1-&gt;3)]-beta-D-GlcNAc derivative + GDP-beta-L-fucose = an alpha-Neu5Ac-(2-&gt;3)-beta-D-Gal-(1-&gt;4)-[alpha-L-Fuc-(1-&gt;3)]-beta-D-GlcNAc-(1-&gt;3)-beta-D-Gal-(1-&gt;4)-[alpha-L-Fuc-(1-&gt;3)]-beta-D-GlcNAc derivative + GDP + H(+). The enzyme catalyses a beta-D-galactosyl-(1-&gt;4)-N-acetyl-beta-D-glucosaminyl derivative + GDP-beta-L-fucose = a beta-D-galactosyl-(1-&gt;4)-[alpha-L-fucosyl-(1-&gt;3)]-N-acetyl-beta-D-glucosaminyl derivative + GDP + H(+). It catalyses the reaction a neolactoside nLc4Cer + GDP-beta-L-fucose = a neolactoside III(3)-alpha-Fuc-nLc4Cer + GDP + H(+). It carries out the reaction a neolactoside nLc6Cer + GDP-beta-L-fucose = beta-D-galactosyl-(1-&gt;4)-N-acetyl-beta-D-glucosaminyl-(1-&gt;3)-beta-D-galactosyl-(1-&gt;4)-[alpha-L-fucosyl-(1-&gt;3)]-N-acetyl-beta-D-glucosaminyl-(1-&gt;3)-beta-D-galactosyl-(1-&gt;4)-beta-D-glucosyl-(1&lt;-&gt;1')-ceramide + GDP + H(+). The catalysed reaction is a neolactoside nLc6Cer(d18:1(4E)) + GDP-beta-L-fucose = a neolactoside III(3)-alpha-Fuc-nLc6Cer(d18:1(4E)) + GDP + H(+). The enzyme catalyses a neolactoside nLc4Cer(d18:1(4E)) + GDP-beta-L-fucose = a neolactoside III(3)-alpha-Fuc-nLc4Cer(d18:1(4E)) + GDP + H(+). It catalyses the reaction a neolactoside VI(3)-alpha-NeuNAc-nLc6Cer + GDP-beta-L-fucose = a neolactoside VI(3)-alpha-NeuAc,III(3)-alphaFuc-nLc6Cer + GDP + H(+). It carries out the reaction beta-D-galactosyl-(1-&gt;4)-N-acetyl-D-glucosamine + GDP-beta-L-fucose = beta-D-galactosyl-(1-&gt;4)-[alpha-L-fucosyl-(1-&gt;3)]-N-acetyl-D-glucosamine + GDP + H(+). The catalysed reaction is N-acetyl-alpha-neuraminosyl-(2-&gt;3)-beta-D-galactosyl-(1-&gt;4)-N-acetyl-beta-D-glucosamine + GDP-beta-L-fucose = N-acetyl-alpha-neuraminosyl-(2-&gt;3)-beta-D-galactosyl-(1-&gt;4)-[alpha-L-fucosyl-(1-&gt;3)]-N-acetyl-beta-D-glucosamine + GDP + H(+). The enzyme catalyses alpha-L-Fuc-(1-&gt;2)-beta-D-Gal-(1-&gt;4)-D-GlcNAc + GDP-beta-L-fucose = alpha-L-Fuc-(1-&gt;2)-beta-D-Gal-(1-&gt;4)-[alpha-L-Fuc-(1-&gt;3)]-D-GlcNAc + GDP + H(+). It catalyses the reaction an alpha-Neu5Ac-(2-&gt;3)-beta-D-Gal-(1-&gt;3)-D-GlcNAc derivative + GDP-beta-L-fucose = an alpha-Neu5Ac-(2-&gt;3)-beta-D-Gal-(1-&gt;3)-[alpha-L-Fuc-(1-&gt;4)]-beta-D-GlcNAc derivative + GDP + H(+). It functions in the pathway protein modification; protein glycosylation. Functionally, catalyzes preferentially the transfer of L-fucose, from a guanosine diphosphate-beta-L-fucose, to the N-acetyl-beta-D-glucosamine (GlcNAc) of an N-acetyllactosamine unit (type 2 chain) of an oligosaccharide, or a glycoprotein- and a glycolipid-linked N-acetyllactosamine unit via an alpha (1,3) linkage and participates in the surface expression of VIM-2, Lewis X/SSEA-1 and sialyl Lewis X antigens. Preferentially transfers fucose to the GlcNAc of an internal N-acetyllactosamine unit of a poly-N-acetyllactosamine chain acceptor substrate. Also catalyzes to a lesser extend the transfer of L-fucose to the GlcNAc of a type 1 (beta-D-galactosyl-(1-&gt;3)-N-acetyl-beta-D-glucosaminyl) or H-type 1 (alpha-L-Fuc-(1-&gt;2)-beta-D-Gal-(1-&gt;3)-D-GlcNAc) chain oligosaccharide via an alpha (1,4) linkage. Preferentially catalyzes sialylated type 2 oligosaccharide acceptors over neutral type 2 or H type 2 (alpha-L-Fuc-(1-&gt;2)-beta-D-Gal-(1-&gt;4)-D-GlcNAc) oligosaccharide acceptors. Lactose-based structures are also acceptor substrates. In Gorilla gorilla gorilla (Western lowland gorilla), this protein is 4-galactosyl-N-acetylglucosaminide 3-alpha-L-fucosyltransferase FUT5.